Reading from the N-terminus, the 228-residue chain is Ribonuclease S-4 (228 aa).

The first 27 residues, 1–27 (MGITGMTYMFTMVLSLIVLIFSASTVG), serve as a signal peptide directing secretion. Gln-36 contacts RNA. An intrachain disulfide couples Cys-42 to Cys-49. His-60 lines the RNA pocket. The active-site Proton donor is the His-60. Cys-75 and Cys-119 form a disulfide bridge. A glycan (N-linked (GlcNAc) asparagine) is linked at Asn-87. 98–99 (NV) is a binding site for RNA. N-linked (GlcNAc...) asparagine glycosylation is present at Asn-101. Residues Phe-108, 111-112 (RE), and 115-116 (KH) contribute to the RNA site. Residue Glu-112 is part of the active site. Catalysis depends on His-116, which acts as the Proton acceptor. Residues Asn-144, Asn-160, and Asn-175 are each glycosylated (N-linked (GlcNAc...) asparagine). Disulfide bonds link Cys-183-Cys-222 and Cys-199-Cys-210.

Belongs to the RNase T2 family. The N-glycans attached at Asn-101, Asn-160 and Asn-175 consist predominantly of disaccharide (GlcNAc-GlcNAc). The N-glycan at 87 is 53% monosaccharide and 47% disaccharide. The N-glycan at Asn-144 contains mannose and xylose.

The protein resides in the secreted. It is found in the extracellular space. It catalyses the reaction a ribonucleotidyl-ribonucleotide-RNA + H2O = a 3'-end 3'-phospho-ribonucleotide-RNA + a 5'-end dephospho-ribonucleoside-RNA + H(+). Functionally, self-incompatibility (SI) is the inherited ability of a flowering plant to prevent self-fertilization by discriminating between self and non-self pollen during pollination. In many species, self-incompatibility is controlled by the single, multiallelic locus S. This is Ribonuclease S-4 from Pyrus pyrifolia (Chinese pear).